Here is a 303-residue protein sequence, read N- to C-terminus: Ferrochelatase (303 aa).

Fe cation-binding residues include histidine 185 and glutamate 262.

Belongs to the ferrochelatase family.

It localises to the cytoplasm. It catalyses the reaction heme b + 2 H(+) = protoporphyrin IX + Fe(2+). The protein operates within porphyrin-containing compound metabolism; protoheme biosynthesis; protoheme from protoporphyrin-IX: step 1/1. Functionally, catalyzes the ferrous insertion into protoporphyrin IX. This chain is Ferrochelatase, found in Campylobacter jejuni subsp. doylei (strain ATCC BAA-1458 / RM4099 / 269.97).